A 444-amino-acid chain; its full sequence is MSLANLRTHYTAEVKPESVDNGQKITLAGWIHEVRDLGGICFVVLRDREGKAQVTLVKKKIDKELFDAARRLIRESVISVTGSVKFEEKAPNGYELLPEEIKVLNVAGSPLPMDTTGKVEAELDTRLDSRFIDLRRAETTAVFKIRHEALQAIREYFVKNKFIETATPKVVATATEGGTALFPITYFDREAFLNQSPQLFKQILMGGGFDRVFEIGPIFRAEEHDTRRHLNEATSIDVEVSFADHFDVMEILENLVAHIYTRVIENCKASLEILGVELKVPKTPFLKLTYDEVIEIVNSRCEEKMHWGDDLGTLGEHTVGNYVYETTGESHYFIIDWPTEIKPFYAMPYEDRPEFSKSFDMMHRTMELSSGAQRIHISELLKSRIESQGLNPDGFEFYLKAFEYGMPPHAGWGMGCERFVMTMLGTENIRDTVLFPRDRRRLSP.

E176 serves as a coordination point for L-aspartate. Positions 198–201 (QLFK) are aspartate. R220 contacts L-aspartate. ATP contacts are provided by residues 220-222 (RAE), 228-230 (RHL), and E367. Mg(2+)-binding residues include E367 and S370. L-aspartate-binding residues include S370 and R374. An ATP-binding site is contributed by 415 to 418 (GCER).

It belongs to the class-II aminoacyl-tRNA synthetase family. Type 2 subfamily. As to quaternary structure, homodimer. It depends on Mg(2+) as a cofactor.

The protein localises to the cytoplasm. It catalyses the reaction tRNA(Asx) + L-aspartate + ATP = L-aspartyl-tRNA(Asx) + AMP + diphosphate. Aspartyl-tRNA synthetase with relaxed tRNA specificity since it is able to aspartylate not only its cognate tRNA(Asp) but also tRNA(Asn). Reaction proceeds in two steps: L-aspartate is first activated by ATP to form Asp-AMP and then transferred to the acceptor end of tRNA(Asp/Asn). This is Aspartate--tRNA(Asp/Asn) ligase from Methanosarcina acetivorans (strain ATCC 35395 / DSM 2834 / JCM 12185 / C2A).